A 625-amino-acid polypeptide reads, in one-letter code: DNA-directed RNA polymerase subunit gamma (625 aa).

Residues C71, C73, C86, and C89 each coordinate Zn(2+). Mg(2+) is bound by residues D467, D469, and D471.

The protein belongs to the RNA polymerase beta' chain family. RpoC1 subfamily. As to quaternary structure, in cyanobacteria the RNAP catalytic core is composed of 2 alpha, 1 beta, 1 beta', 1 gamma and 1 omega subunit. When a sigma factor is associated with the core the holoenzyme is formed, which can initiate transcription. Mg(2+) is required as a cofactor. Zn(2+) serves as cofactor.

It carries out the reaction RNA(n) + a ribonucleoside 5'-triphosphate = RNA(n+1) + diphosphate. Functionally, DNA-dependent RNA polymerase catalyzes the transcription of DNA into RNA using the four ribonucleoside triphosphates as substrates. The protein is DNA-directed RNA polymerase subunit gamma of Gloeothece citriformis (strain PCC 7424) (Cyanothece sp. (strain PCC 7424)).